The sequence spans 280 residues: Fructose-1,6-bisphosphatase class 1 (280 aa).

Residues Glu-64, Asp-83, Leu-85, and Asp-86 each coordinate Mg(2+). Residues 86–89, Tyr-189, and Lys-220 each bind substrate; that span reads DGSS. Glu-226 lines the Mg(2+) pocket.

The protein belongs to the FBPase class 1 family. Homotetramer. The cofactor is Mg(2+).

The protein resides in the cytoplasm. The catalysed reaction is beta-D-fructose 1,6-bisphosphate + H2O = beta-D-fructose 6-phosphate + phosphate. It functions in the pathway carbohydrate biosynthesis; gluconeogenesis. This chain is Fructose-1,6-bisphosphatase class 1, found in Campylobacter jejuni subsp. jejuni serotype O:2 (strain ATCC 700819 / NCTC 11168).